The following is a 944-amino-acid chain: Isoleucine--tRNA ligase (944 aa).

Residues 58–68 (PYANGSIHIGH) carry the 'HIGH' region motif. Residue glutamate 563 coordinates L-isoleucyl-5'-AMP. The short motif at 604-608 (KMSKS) is the 'KMSKS' region element. Lysine 607 is an ATP binding site. Cysteine 907, cysteine 910, cysteine 927, and cysteine 930 together coordinate Zn(2+).

The protein belongs to the class-I aminoacyl-tRNA synthetase family. IleS type 1 subfamily. In terms of assembly, monomer. The cofactor is Zn(2+).

It is found in the cytoplasm. It catalyses the reaction tRNA(Ile) + L-isoleucine + ATP = L-isoleucyl-tRNA(Ile) + AMP + diphosphate. Functionally, catalyzes the attachment of isoleucine to tRNA(Ile). As IleRS can inadvertently accommodate and process structurally similar amino acids such as valine, to avoid such errors it has two additional distinct tRNA(Ile)-dependent editing activities. One activity is designated as 'pretransfer' editing and involves the hydrolysis of activated Val-AMP. The other activity is designated 'posttransfer' editing and involves deacylation of mischarged Val-tRNA(Ile). The polypeptide is Isoleucine--tRNA ligase (Salmonella typhi).